The primary structure comprises 193 residues: CRIB domain-containing protein RIC5 (193 aa).

The 14-residue stretch at 29–42 (IGIPTDVKHVAHIG) folds into the CRIB domain. The interval 42 to 193 (GWEGPSATTP…CAGLGSSTGR (152 aa)) is disordered. A compositionally biased stretch (basic and acidic residues) spans 55 to 67 (HDFKPTDQTKTET). Over residues 90–100 (STGNNSPTESP) the composition is skewed to polar residues. The span at 123-134 (GSGSESGSGLEL) shows a compositional bias: low complexity.

Interacts with ARAC11/ROP1. In terms of tissue distribution, expressed in flowers and pollen.

It is found in the cell membrane. Functionally, functions as a downstream effector of Rho-related GTP binding proteins of the 'Rho of Plants' (ROPs) family. Participates in the propagation of ROP GTPase signals in specific cellular responses. Is involved in pollen tube growth regulation through its interaction with ARAC11/ROP1. The chain is CRIB domain-containing protein RIC5 (RIC5) from Arabidopsis thaliana (Mouse-ear cress).